Here is a 413-residue protein sequence, read N- to C-terminus: Putative F-box protein At3g23970 (413 aa).

An F-box domain is found at 1-42 (MNIPPELTFEVLVRLPLKSLARFRSVRKEWKLVIDSEFFRDC).

The protein is Putative F-box protein At3g23970 of Arabidopsis thaliana (Mouse-ear cress).